A 206-amino-acid chain; its full sequence is HTH-type transcriptional regulator Hpr (206 aa).

Residues 13 to 157 enclose the HTH marR-type domain; the sequence is ALLFSQRMAQ…MMSIIRHIYG (145 aa). The segment at residues 63–86 is a DNA-binding region (H-T-H motif); that stretch reads ISEIAKFGVMHVSTAFNFSKKLEE. Residues 177 to 206 form a disordered region; that stretch reads SEEGKMKKKQEAKEAGESIEVDKPLEPLKN. Positions 178-206 are enriched in basic and acidic residues; the sequence is EEGKMKKKQEAKEAGESIEVDKPLEPLKN.

Homodimer.

Its function is as follows. Negative regulator of protease production and sporulation. The chain is HTH-type transcriptional regulator Hpr from Bacillus licheniformis (strain ATCC 14580 / DSM 13 / JCM 2505 / CCUG 7422 / NBRC 12200 / NCIMB 9375 / NCTC 10341 / NRRL NRS-1264 / Gibson 46).